We begin with the raw amino-acid sequence, 578 residues long: Proline--tRNA ligase (578 aa).

This sequence belongs to the class-II aminoacyl-tRNA synthetase family. ProS type 1 subfamily. In terms of assembly, homodimer.

The protein resides in the cytoplasm. The catalysed reaction is tRNA(Pro) + L-proline + ATP = L-prolyl-tRNA(Pro) + AMP + diphosphate. Catalyzes the attachment of proline to tRNA(Pro) in a two-step reaction: proline is first activated by ATP to form Pro-AMP and then transferred to the acceptor end of tRNA(Pro). As ProRS can inadvertently accommodate and process non-cognate amino acids such as alanine and cysteine, to avoid such errors it has two additional distinct editing activities against alanine. One activity is designated as 'pretransfer' editing and involves the tRNA(Pro)-independent hydrolysis of activated Ala-AMP. The other activity is designated 'posttransfer' editing and involves deacylation of mischarged Ala-tRNA(Pro). The misacylated Cys-tRNA(Pro) is not edited by ProRS. This is Proline--tRNA ligase from Burkholderia cenocepacia (strain HI2424).